Here is a 435-residue protein sequence, read N- to C-terminus: MSETPIVSNHDLGKYVDQKVVIQGWVHGIRGSNARQFLSLRNSGKILQVLAEKEILGEEVFQTVKHLRQETSVTVIGNLVKNEKSPIGFELVMESIQIVGESENYPITPKEHGIDFLISQRHLWLRSSKQLAILRVRDNLSFAIRKYFHERDFLLIDTPILTGSVGESAGTLFSTEYFDLGNAYLAQTGQLYLETAIFAHNKVFCYGPTFRAEKSKTRRHLTEFWMVEAEVAFATHAENLKLQEDFVKTVIKETVQNSFQDLKVLERDPAPLLAYLEKDFPVIDYTKALEILQSKGEDIVWGDDINSEREQILTVEFGGPVFIQKYPREAKAFYMKVNPEDPRTVLNADLIAPDGVGEIIGGSEREENYENIVQRLKEEKLPVESYDWYLDLRKYGSVPHSGFGLGSERLIAWICGLAHVRECIPFPRMMERLYP.

Belongs to the class-II aminoacyl-tRNA synthetase family. In terms of assembly, homodimer.

Its subcellular location is the cytoplasm. The enzyme catalyses tRNA(Asn) + L-asparagine + ATP = L-asparaginyl-tRNA(Asn) + AMP + diphosphate + H(+). The sequence is that of Asparagine--tRNA ligase from Leptospira interrogans serogroup Icterohaemorrhagiae serovar copenhageni (strain Fiocruz L1-130).